The following is a 520-amino-acid chain: GMP synthase [glutamine-hydrolyzing] (520 aa).

In terms of domain architecture, Glutamine amidotransferase type-1 spans 12–205; that stretch reads KIIVLDYGSQ…AISICGARGD (194 aa). The Nucleophile role is filled by Cys89. Active-site residues include His179 and Glu181. In terms of domain architecture, GMPS ATP-PPase spans 206–395; sequence WSMDNFIDME…LGMPEEIVWR (190 aa). ATP is bound at residue 233–239; the sequence is SGGVDSS.

In terms of assembly, homodimer.

It carries out the reaction XMP + L-glutamine + ATP + H2O = GMP + L-glutamate + AMP + diphosphate + 2 H(+). Its pathway is purine metabolism; GMP biosynthesis; GMP from XMP (L-Gln route): step 1/1. Catalyzes the synthesis of GMP from XMP. The polypeptide is GMP synthase [glutamine-hydrolyzing] (Streptococcus pyogenes serotype M1).